Reading from the N-terminus, the 604-residue chain is M-phase inducer phosphatase cdc-25.1 (604 aa).

2 disordered regions span residues Pro33 to Phe67 and Glu127 to Asp188. The span at Arg44–Ser54 shows a compositional bias: polar residues. Residues Glu127–Asn138 show a composition bias toward basic and acidic residues. Positions Phe305 to Ile413 constitute a Rhodanese domain. 2 disordered regions span residues Ala443–Ser464 and Asp562–Gln588.

This sequence belongs to the MPI phosphatase family.

It catalyses the reaction O-phospho-L-tyrosyl-[protein] + H2O = L-tyrosyl-[protein] + phosphate. This chain is M-phase inducer phosphatase cdc-25.1 (cdc-25.1), found in Caenorhabditis elegans.